Here is a 282-residue protein sequence, read N- to C-terminus: 2-dehydro-3-deoxyphosphooctonate aldolase (282 aa).

Belongs to the KdsA family.

It is found in the cytoplasm. The enzyme catalyses D-arabinose 5-phosphate + phosphoenolpyruvate + H2O = 3-deoxy-alpha-D-manno-2-octulosonate-8-phosphate + phosphate. Its pathway is carbohydrate biosynthesis; 3-deoxy-D-manno-octulosonate biosynthesis; 3-deoxy-D-manno-octulosonate from D-ribulose 5-phosphate: step 2/3. It participates in bacterial outer membrane biogenesis; lipopolysaccharide biosynthesis. The protein is 2-dehydro-3-deoxyphosphooctonate aldolase of Shewanella piezotolerans (strain WP3 / JCM 13877).